The sequence spans 462 residues: Juvenile hormone epoxide hydrolase (462 aa).

The chain crosses the membrane as a helical span at residues 4 to 24; it reads ILSSFVAGVAIGSGLVITYVL. D227 functions as the Nucleophile in the catalytic mechanism. Y372 acts as the Proton donor in catalysis. Residue H428 is the Proton acceptor of the active site.

Belongs to the peptidase S33 family.

It localises to the microsome membrane. The protein localises to the endoplasmic reticulum membrane. The enzyme catalyses cis-stilbene oxide + H2O = (1R,2R)-hydrobenzoin. It carries out the reaction 1-(4-methoxyphenyl)-N-methyl-N-[(3-methyloxetan-3-yl)methyl]methanamine + H2O = 2-{[(4-methoxybenzyl)(methyl)amino]methyl}-2-methylpropane-1,3-diol. Catalyzes juvenile hormone hydrolysis. The chain is Juvenile hormone epoxide hydrolase from Manduca sexta (Tobacco hawkmoth).